The primary structure comprises 264 residues: Thymidylate synthase (264 aa).

Arginine 21 is a binding site for dUMP. (6R)-5,10-methylene-5,6,7,8-tetrahydrofolate is bound at residue histidine 51. DUMP is bound at residue 126–127 (RR). Catalysis depends on cysteine 146, which acts as the Nucleophile. Residues 166-169 (RSAD), asparagine 177, and 207-209 (HLY) contribute to the dUMP site. Residue aspartate 169 coordinates (6R)-5,10-methylene-5,6,7,8-tetrahydrofolate. Alanine 263 is a (6R)-5,10-methylene-5,6,7,8-tetrahydrofolate binding site.

The protein belongs to the thymidylate synthase family. Bacterial-type ThyA subfamily. Homodimer.

It localises to the cytoplasm. The enzyme catalyses dUMP + (6R)-5,10-methylene-5,6,7,8-tetrahydrofolate = 7,8-dihydrofolate + dTMP. It functions in the pathway pyrimidine metabolism; dTTP biosynthesis. Functionally, catalyzes the reductive methylation of 2'-deoxyuridine-5'-monophosphate (dUMP) to 2'-deoxythymidine-5'-monophosphate (dTMP) while utilizing 5,10-methylenetetrahydrofolate (mTHF) as the methyl donor and reductant in the reaction, yielding dihydrofolate (DHF) as a by-product. This enzymatic reaction provides an intracellular de novo source of dTMP, an essential precursor for DNA biosynthesis. This chain is Thymidylate synthase, found in Nitrosomonas eutropha (strain DSM 101675 / C91 / Nm57).